We begin with the raw amino-acid sequence, 276 residues long: Carbonic anhydrase Nec1 (276 aa).

The first 27 residues, 1 to 27 (MKMINSIFTHGSLIILLLLFHSISIKA), serve as a signal peptide directing secretion. The Alpha-carbonic anhydrase domain maps to 34–270 (REFDYLEGSE…LNHREVQLHC (237 aa)). Cysteine 59 and cysteine 220 are oxidised to a cystine. Residue histidine 98 is the Proton acceptor of the active site. Zn(2+)-binding residues include histidine 124 and histidine 126. A glycan (N-linked (GlcNAc...) asparagine) is linked at asparagine 134. Position 143 (histidine 143) interacts with Zn(2+). Residues 216-217 (TT) are substrate binding.

It belongs to the alpha-class carbonic anhydrase family. Homodimer. Requires Zn(2+) as cofactor. In terms of tissue distribution, confined to nectaries.

It catalyses the reaction hydrogencarbonate + H(+) = CO2 + H2O. It functions in the pathway one-carbon metabolism. In terms of biological role, involved in the production of blood-red nectar containing the alkaloid nesocodin and that serves as a visual attractant for pollinator visitation, including vertebrates such as Phelsuma geckos. The nectar is initially acidic and pale yellow, but slowly becomes alkaline before turning into red within 24 hours. Together with NEC2 and NEC3, facilitates the condensation of sinapaldehyde ((E)-3,5-dimethoxy-4-hydroxycinnamaldehyde) and proline to form nesocodin, a pigment with a stable imine bond. Mediates the alkalinization (pH increase) of the flower nectar by catalyzing the reversible hydration of carbon dioxide. This chain is Carbonic anhydrase Nec1, found in Nesocodon mauritianus (Blue Mauritius bellflower).